Consider the following 43-residue polypeptide: Potassium channel toxin gamma-KTx 3.2 (43 aa).

4 disulfide bridges follow: cysteine 5–cysteine 23, cysteine 11–cysteine 34, cysteine 20–cysteine 39, and cysteine 24–cysteine 41.

Belongs to the ergtoxin family. Gamma-KTx 3 subfamily. Expressed by the venom gland.

The protein localises to the secreted. In terms of biological role, blocks Kv11/ERG potassium channels. In Centruroides elegans (Bark scorpion), this protein is Potassium channel toxin gamma-KTx 3.2.